The following is a 216-amino-acid chain: Redox-sensing transcriptional repressor Rex (216 aa).

Residues 15 to 54 (KYLRVTQQLIEEGRDAVSSKELGDFTGINPVQVRRDLNAI) constitute a DNA-binding region (H-T-H motif). Residue 89–94 (GAGNLG) participates in NAD(+) binding.

Belongs to the transcriptional regulatory Rex family. As to quaternary structure, homodimer.

It localises to the cytoplasm. Modulates transcription in response to changes in cellular NADH/NAD(+) redox state. The sequence is that of Redox-sensing transcriptional repressor Rex from Rubrobacter xylanophilus (strain DSM 9941 / JCM 11954 / NBRC 16129 / PRD-1).